The following is a 177-amino-acid chain: ATP synthase subunit b (177 aa).

The helical transmembrane segment at 35–55 (FFVVLAIFLIVLAVIGTFVVP) threads the bilayer.

It belongs to the ATPase B chain family. In terms of assembly, F-type ATPases have 2 components, F(1) - the catalytic core - and F(0) - the membrane proton channel. F(1) has five subunits: alpha(3), beta(3), gamma(1), delta(1), epsilon(1). F(0) has three main subunits: a(1), b(2) and c(10-14). The alpha and beta chains form an alternating ring which encloses part of the gamma chain. F(1) is attached to F(0) by a central stalk formed by the gamma and epsilon chains, while a peripheral stalk is formed by the delta and b chains.

It localises to the cell membrane. Functionally, f(1)F(0) ATP synthase produces ATP from ADP in the presence of a proton or sodium gradient. F-type ATPases consist of two structural domains, F(1) containing the extramembraneous catalytic core and F(0) containing the membrane proton channel, linked together by a central stalk and a peripheral stalk. During catalysis, ATP synthesis in the catalytic domain of F(1) is coupled via a rotary mechanism of the central stalk subunits to proton translocation. Component of the F(0) channel, it forms part of the peripheral stalk, linking F(1) to F(0). In Mycobacteroides abscessus (strain ATCC 19977 / DSM 44196 / CCUG 20993 / CIP 104536 / JCM 13569 / NCTC 13031 / TMC 1543 / L948) (Mycobacterium abscessus), this protein is ATP synthase subunit b.